Consider the following 223-residue polypeptide: Fibroblast growth factor-binding protein 2 (223 aa).

Residues 1–19 (MKFVPCLLLVTLSCLGTLG) form the signal peptide. The interval 23–45 (RQKQGSTGEEFHFQTGGRDSCTM) is disordered. 3 disulfide bridges follow: Cys43–Cys63, Cys72–Cys106, and Cys81–Cys117. The disordered stretch occupies residues 120–201 (AGPQAHMQQV…PGGNEEAKKK (82 aa)). A compositionally biased stretch (polar residues) spans 125-144 (HMQQVTSSLKGSPEPNQQPE). The segment covering 175–186 (AKPTTRPTAKPT) has biased composition (low complexity). The cysteines at positions 206 and 214 are disulfide-linked.

It belongs to the fibroblast growth factor-binding protein family. In terms of tissue distribution, expressed in serum, peripheral leukocytes and cytotoxic T-lymphocytes, but not in granulocytes and monocytes (at protein level).

The protein resides in the secreted. The protein localises to the extracellular space. The sequence is that of Fibroblast growth factor-binding protein 2 (FGFBP2) from Homo sapiens (Human).